Consider the following 433-residue polypeptide: CinA-like protein (433 aa).

The protein belongs to the CinA family.

This Frankia casuarinae (strain DSM 45818 / CECT 9043 / HFP020203 / CcI3) protein is CinA-like protein.